Here is a 256-residue protein sequence, read N- to C-terminus: H-2 class II histocompatibility antigen, A-B alpha chain (256 aa).

Residues 1 to 23 form the signal peptide; that stretch reads MPRSRALILGVLALTTMLSLCGG. Residues 24–111 are alpha-1; it reads EDDIEADHVG…KRSNSTPATN (88 aa). The Extracellular segment spans residues 24–218; sequence EDDIEADHVG…IPAPMSELTE (195 aa). The tract at residues 112 to 205 is alpha-2; that stretch reads EAPQATVFPK…GLEEPVLKHW (94 aa). The 93-residue stretch at 114–206 folds into the Ig-like C1-type domain; the sequence is PQATVFPKSP…LEEPVLKHWE (93 aa). An intrachain disulfide couples cysteine 134 to cysteine 190. The N-linked (GlcNAc...) asparagine glycan is linked to asparagine 145. The tract at residues 206 to 218 is connecting peptide; it reads EPEIPAPMSELTE. Residues 219-244 traverse the membrane as a helical segment; the sequence is TVVCALGLSVGLVGIVVGTIFIIQGL. Residues 245–256 lie on the Cytoplasmic side of the membrane; sequence RSGGTSRHPGPL.

The protein belongs to the MHC class II family.

It is found in the membrane. The sequence is that of H-2 class II histocompatibility antigen, A-B alpha chain (H2-Aa) from Mus musculus (Mouse).